The sequence spans 69 residues: Large ribosomal subunit protein bL31 (69 aa).

Zn(2+)-binding residues include cysteine 17, cysteine 19, cysteine 37, and cysteine 40.

Belongs to the bacterial ribosomal protein bL31 family. Type A subfamily. As to quaternary structure, part of the 50S ribosomal subunit. Zn(2+) is required as a cofactor.

Functionally, binds the 23S rRNA. The protein is Large ribosomal subunit protein bL31 of Caldanaerobacter subterraneus subsp. tengcongensis (strain DSM 15242 / JCM 11007 / NBRC 100824 / MB4) (Thermoanaerobacter tengcongensis).